The following is a 381-amino-acid chain: MRRGIIVEKNKKFVTLLTPDGQFLKAKNDRHSYEIGEEIMLPSETRMGRRASFFDFFKLRPFKMGIFTMTAIMLFIFIVLPVFSNNKAYAYMTIDINPSVEMALNSDYEVIELTPLNDEGQKVVNDIDDWEKTDFKKVIDDIITDCSEHGYVKKSKEILISTVYENTEDNTYKKAVKKQLNDVTEKYKTTYRMESLESDMQTREKAKKEGVSTGSYIKSNEKNDNKDIKDDSSKPSGEEDQKSDENEDENTDQTDTQDSKQGDNEQLNDADSGDQKEEKADDQIDDSDKDKKIKESDENTNTEKDGDHEQTPIQDPQDKGNENNGADKGQSQYHRDWNNGEQGKNRSSSRRDNASDRRNPNGYSSDNHSAKNEDSPSAPGE.

Residues 1 to 63 (MRRGIIVEKN…FDFFKLRPFK (63 aa)) lie on the Cytoplasmic side of the membrane. The RsgI N-terminal anti-sigma domain maps to 2-50 (RRGIIVEKNKKFVTLLTPDGQFLKAKNDRHSYEIGEEIMLPSETRMGRR). Residues 64-84 (MGIFTMTAIMLFIFIVLPVFS) traverse the membrane as a helical segment. Over 85–381 (NNKAYAYMTI…NEDSPSAPGE (297 aa)) the chain is Extracellular. A disordered region spans residues 198-381 (SDMQTREKAK…NEDSPSAPGE (184 aa)). 4 stretches are compositionally biased toward basic and acidic residues: residues 200-210 (MQTREKAKKEG), 219-244 (SNEK…QKSD), 273-321 (GDQK…DKGN), and 349-359 (SRRDNASDRRN).

As to quaternary structure, interacts (via RsgI N-terminal anti-sigma domain) with SigI.

The protein localises to the cell membrane. In terms of biological role, anti-sigma factor for SigI. Negatively regulates SigI activity through direct interaction. The protein is Anti-sigma-I factor RsgI of Bacillus subtilis (strain 168).